We begin with the raw amino-acid sequence, 325 residues long: Methionyl-tRNA formyltransferase (325 aa).

111–114 (SILP) lines the (6S)-5,6,7,8-tetrahydrofolate pocket.

This sequence belongs to the Fmt family.

The catalysed reaction is L-methionyl-tRNA(fMet) + (6R)-10-formyltetrahydrofolate = N-formyl-L-methionyl-tRNA(fMet) + (6S)-5,6,7,8-tetrahydrofolate + H(+). In terms of biological role, attaches a formyl group to the free amino group of methionyl-tRNA(fMet). The formyl group appears to play a dual role in the initiator identity of N-formylmethionyl-tRNA by promoting its recognition by IF2 and preventing the misappropriation of this tRNA by the elongation apparatus. This Microcystis aeruginosa (strain NIES-843 / IAM M-2473) protein is Methionyl-tRNA formyltransferase.